We begin with the raw amino-acid sequence, 503 residues long: ATP-dependent RNA helicase dbp3 (503 aa).

Residues 1 to 13 (MGKRVSHNEGADR) show a composition bias toward basic and acidic residues. A disordered region spans residues 1–37 (MGKRVSHNEGADRRPKKKAKNEKPEKETMESPAADVT). The Q motif signature appears at 104 to 112 (SFASPTPIQ). One can recognise a Helicase ATP-binding domain in the interval 116 to 292 (WPLLFAGRDV…ATFMTSAVTV (177 aa)). 129 to 136 (AETGSGKT) serves as a coordination point for ATP. Positions 239–242 (DEAD) match the DEAD box motif. Positions 323–472 (RLVQLLSENQ…EVPQELLKFG (150 aa)) constitute a Helicase C-terminal domain.

Belongs to the DEAD box helicase family. DDX5/DBP2 subfamily.

It is found in the nucleus. Its subcellular location is the nucleolus. The enzyme catalyses ATP + H2O = ADP + phosphate + H(+). Its function is as follows. ATP-dependent RNA helicase required for 60S ribosomal subunit synthesis. Involved in efficient pre-rRNA processing, predominantly at site A3, which is necessary for the normal formation of 25S and 5.8S rRNAs. This chain is ATP-dependent RNA helicase dbp3 (dbp3), found in Aspergillus clavatus (strain ATCC 1007 / CBS 513.65 / DSM 816 / NCTC 3887 / NRRL 1 / QM 1276 / 107).